Reading from the N-terminus, the 729-residue chain is DNA topoisomerase 3 (729 aa).

In terms of domain architecture, Toprim spans 3-136 (KSVVIAEKPS…IKRLWISSVT (134 aa)). The Mg(2+) site is built by glutamate 9 and aspartate 105. The region spanning 153–594 (YDNLYASAVA…EMKNYTKEIV (442 aa)) is the Topo IA-type catalytic domain. The tract at residues 187 to 192 (NCGRVQ) is interaction with DNA. Catalysis depends on tyrosine 310, which acts as the O-(5'-phospho-DNA)-tyrosine intermediate. The segment covering 686–713 (ERRKKESGNKADKRDVQKYMKQQKKEEE) has biased composition (basic and acidic residues). The disordered stretch occupies residues 686–718 (ERRKKESGNKADKRDVQKYMKQQKKEEEPLNNP).

Belongs to the type IA topoisomerase family. It depends on Mg(2+) as a cofactor.

It carries out the reaction ATP-independent breakage of single-stranded DNA, followed by passage and rejoining.. Functionally, releases the supercoiling and torsional tension of DNA, which is introduced during the DNA replication and transcription, by transiently cleaving and rejoining one strand of the DNA duplex. Introduces a single-strand break via transesterification at a target site in duplex DNA. The scissile phosphodiester is attacked by the catalytic tyrosine of the enzyme, resulting in the formation of a DNA-(5'-phosphotyrosyl)-enzyme intermediate and the expulsion of a 3'-OH DNA strand. The free DNA strand then undergoes passage around the unbroken strand, thus removing DNA supercoils. Finally, in the religation step, the DNA 3'-OH attacks the covalent intermediate to expel the active-site tyrosine and restore the DNA phosphodiester backbone. The chain is DNA topoisomerase 3 from Bacillus thuringiensis subsp. konkukian (strain 97-27).